Here is a 245-residue protein sequence, read N- to C-terminus: Platelet-derived growth factor subunit B (245 aa).

Residues methionine 1 to alanine 20 form the signal peptide. Positions glutamate 21–arginine 81 are cleaved as a propeptide — removed in mature form. A glycan (N-linked (GlcNAc...) asparagine) is linked at asparagine 63. 3 disulfide bridges follow: cysteine 101–cysteine 145, cysteine 134–cysteine 182, and cysteine 138–cysteine 184. Residues arginine 195–alanine 245 constitute a propeptide, removed in mature form. The segment covering arginine 220–aspartate 235 has biased composition (basic residues). Positions arginine 220–alanine 245 are disordered. Positions lysine 236–alanine 245 are enriched in basic and acidic residues.

The protein belongs to the PDGF/VEGF growth factor family. In terms of assembly, antiparallel homodimer; disulfide-linked. Antiparallel heterodimer with PDGFA; disulfide-linked. The PDGFB homodimer interacts with PDGFRA and PDGFRB homodimers, and with heterodimers formed by PDGFRA and PDGFRB. The heterodimer composed of PDGFA and PDGFB interacts with PDGFRB homodimers, and with heterodimers formed by PDGFRA and PDGFRB. Interacts with XLKD1. Interacts with LRP1. Interacts with SORL1 (via the N-terminal ectodomain). Interacts with CD82; this interaction inhibits PDGFB-mediated signaling pathway.

It localises to the secreted. Its function is as follows. Growth factor that plays an essential role in the regulation of embryonic development, cell proliferation, cell migration, survival and chemotaxis. Potent mitogen for cells of mesenchymal origin. Required for normal proliferation and recruitment of pericytes and vascular smooth muscle cells in the central nervous system, skin, lung, heart and placenta. Required for normal blood vessel development, and for normal development of kidney glomeruli. Plays an important role in wound healing. Signaling is modulated by the formation of heterodimers with PDGFA. In Felis catus (Cat), this protein is Platelet-derived growth factor subunit B (PDGFB).